Reading from the N-terminus, the 406-residue chain is uncharacterized protein (406 aa).

It is found in the plastid. The protein localises to the chloroplast. This is an uncharacterized protein from Euglena gracilis.